The chain runs to 430 residues: Histidine--tRNA ligase (430 aa).

This sequence belongs to the class-II aminoacyl-tRNA synthetase family. Homodimer.

Its subcellular location is the cytoplasm. It carries out the reaction tRNA(His) + L-histidine + ATP = L-histidyl-tRNA(His) + AMP + diphosphate + H(+). The protein is Histidine--tRNA ligase of Chlamydia caviae (strain ATCC VR-813 / DSM 19441 / 03DC25 / GPIC) (Chlamydophila caviae).